The primary structure comprises 814 residues: Glycogen phosphorylase (814 aa).

Lysine 662 carries the post-translational modification N6-(pyridoxal phosphate)lysine.

The protein belongs to the glycogen phosphorylase family. It depends on pyridoxal 5'-phosphate as a cofactor.

It catalyses the reaction [(1-&gt;4)-alpha-D-glucosyl](n) + phosphate = [(1-&gt;4)-alpha-D-glucosyl](n-1) + alpha-D-glucose 1-phosphate. In terms of biological role, phosphorylase is an important allosteric enzyme in carbohydrate metabolism. Enzymes from different sources differ in their regulatory mechanisms and in their natural substrates. However, all known phosphorylases share catalytic and structural properties. The protein is Glycogen phosphorylase (glgP) of Chlamydia trachomatis serovar D (strain ATCC VR-885 / DSM 19411 / UW-3/Cx).